A 69-amino-acid polypeptide reads, in one-letter code: U2-agatoxin-Ao1c (69 aa).

A signal peptide spans 1–20 (MKAIISLLLISAMVFSMIEA). The propeptide occupies 21 to 34 (VPVEEGLQLFEGER). Cystine bridges form between Cys-36–Cys-52, Cys-43–Cys-57, and Cys-51–Cys-67. At Leu-68 the chain carries Leucine amide.

Belongs to the neurotoxin 01 (U2-agtx) family. As to expression, expressed by the venom gland.

It localises to the secreted. Functionally, insect active toxin causing rapid but reversible paralysis in crickets. No activity shown in mammals. Does not show effect on mammalian voltage-gated calcium channels. The protein is U2-agatoxin-Ao1c of Agelena orientalis (Funnel-web spider).